The following is a 200-amino-acid chain: Insulin, isoform 2 (200 aa).

A disordered region spans residues 148 to 200; the sequence is EVDSSPQPQGSESLPAQPPAQPAPQPEPQQAREPSPEVSCCGLWPRRPQRSQN. Residues 163-174 are compositionally biased toward pro residues; the sequence is AQPPAQPAPQPE. A compositionally biased stretch (low complexity) spans 175-184; the sequence is PQQAREPSPE.

Expressed in pancreas, eye and, to a lower extent, in limb.

The polypeptide is Insulin, isoform 2 (INS-IGF2) (Homo sapiens (Human)).